The primary structure comprises 183 residues: Glutathione-regulated potassium-efflux system ancillary protein KefG (183 aa).

The protein belongs to the NAD(P)H dehydrogenase (quinone) family. KefG subfamily. Interacts with KefB.

It localises to the cell inner membrane. The catalysed reaction is a quinone + NADH + H(+) = a quinol + NAD(+). It carries out the reaction a quinone + NADPH + H(+) = a quinol + NADP(+). Functionally, regulatory subunit of a potassium efflux system that confers protection against electrophiles. Required for full activity of KefB. This Pectobacterium atrosepticum (strain SCRI 1043 / ATCC BAA-672) (Erwinia carotovora subsp. atroseptica) protein is Glutathione-regulated potassium-efflux system ancillary protein KefG.